The sequence spans 389 residues: Probable nitrate transporter NarT (389 aa).

12 consecutive transmembrane segments (helical) span residues 14–34 (TLSL…MPFI), 45–65 (ISII…PFGY), 69–89 (IVGA…PIFF), 97–117 (GMLM…SVGV), 139–159 (GNIG…IIGW), 161–181 (TTVR…FIFG), 211–231 (WYFI…NYLV), 246–266 (GVFI…GDKF), 268–288 (AVKV…ILGI), 294–314 (LFTV…GLIF), 331–351 (IVSM…TYVA), and 353–373 (LTGS…IALF).

The protein belongs to the major facilitator superfamily. Nitrate/nitrite porter (TC 2.A.1.8) family.

It is found in the cell membrane. Functionally, probably required for nitrate uptake under anoxic conditions. Also possibly involved in excretion of nitrite produced by the dissimilatory reduction of nitrate. In Staphylococcus aureus (strain JH9), this protein is Probable nitrate transporter NarT (narT).